A 425-amino-acid polypeptide reads, in one-letter code: Queuine tRNA-ribosyltransferase accessory subunit 2 (425 aa).

The disordered stretch occupies residues 302–323; sequence QNGAQDLEKNSPEEDQEEEVVK. Residues Cys-351, Cys-353, Cys-356, and His-382 each contribute to the Zn(2+) site.

Belongs to the queuine tRNA-ribosyltransferase family. QTRT2 subfamily. As to quaternary structure, heterodimer of a catalytic subunit QTRT1 and an accessory subunit QTRT2. It depends on Zn(2+) as a cofactor.

The protein resides in the cytoplasm. It localises to the mitochondrion outer membrane. Its function is as follows. Non-catalytic subunit of the queuine tRNA-ribosyltransferase (TGT) that catalyzes the base-exchange of a guanine (G) residue with queuine (Q) at position 34 (anticodon wobble position) in tRNAs with GU(N) anticodons (tRNA-Asp, -Asn, -His and -Tyr), resulting in the hypermodified nucleoside queuosine (7-(((4,5-cis-dihydroxy-2-cyclopenten-1-yl)amino)methyl)-7-deazaguanosine). The chain is Queuine tRNA-ribosyltransferase accessory subunit 2 from Gallus gallus (Chicken).